We begin with the raw amino-acid sequence, 203 residues long: dITP/XTP pyrophosphatase (203 aa).

Substrate is bound at residue 16 to 21 (SHNRGK). Residues E48 and D77 each contribute to the Mg(2+) site. The active-site Proton acceptor is the D77. Substrate contacts are provided by residues S78, 161–164 (FGYD), K184, and 189–190 (HR).

Belongs to the HAM1 NTPase family. Homodimer. Mg(2+) is required as a cofactor.

The enzyme catalyses XTP + H2O = XMP + diphosphate + H(+). The catalysed reaction is dITP + H2O = dIMP + diphosphate + H(+). It catalyses the reaction ITP + H2O = IMP + diphosphate + H(+). Functionally, pyrophosphatase that catalyzes the hydrolysis of nucleoside triphosphates to their monophosphate derivatives, with a high preference for the non-canonical purine nucleotides XTP (xanthosine triphosphate), dITP (deoxyinosine triphosphate) and ITP. Seems to function as a house-cleaning enzyme that removes non-canonical purine nucleotides from the nucleotide pool, thus preventing their incorporation into DNA/RNA and avoiding chromosomal lesions. This Rhodospirillum centenum (strain ATCC 51521 / SW) protein is dITP/XTP pyrophosphatase.